The following is a 65-amino-acid chain: Muscarinic toxin 3 (65 aa).

Intrachain disulfides connect cysteine 3–cysteine 24, cysteine 17–cysteine 42, cysteine 46–cysteine 57, and cysteine 58–cysteine 63.

Belongs to the three-finger toxin family. Short-chain subfamily. Aminergic toxin sub-subfamily. Expressed by the venom gland.

Its subcellular location is the secreted. Functionally, potent antagonist (IC(50)=1-10 nM) of M4 (CHRM4) muscarinic receptors, and CHRM1, ADRA1A, ADRA2A and ADRA2C adrenergic receptors. Also antagonises ADRA1B and ADRA1D adrenergic receptors with a 10-times lower affinity. This is Muscarinic toxin 3 from Dendroaspis angusticeps (Eastern green mamba).